The following is a 308-amino-acid chain: Methionyl-tRNA formyltransferase (308 aa).

Residue Ser-109–Pro-112 coordinates (6S)-5,6,7,8-tetrahydrofolate.

This sequence belongs to the Fmt family.

The catalysed reaction is L-methionyl-tRNA(fMet) + (6R)-10-formyltetrahydrofolate = N-formyl-L-methionyl-tRNA(fMet) + (6S)-5,6,7,8-tetrahydrofolate + H(+). Attaches a formyl group to the free amino group of methionyl-tRNA(fMet). The formyl group appears to play a dual role in the initiator identity of N-formylmethionyl-tRNA by promoting its recognition by IF2 and preventing the misappropriation of this tRNA by the elongation apparatus. The polypeptide is Methionyl-tRNA formyltransferase (Phenylobacterium zucineum (strain HLK1)).